A 364-amino-acid polypeptide reads, in one-letter code: Ribosomal RNA large subunit methyltransferase M (364 aa).

Residues Ser-194, Cys-227 to Gly-230, Asp-246, Asp-266, and Asp-284 each bind S-adenosyl-L-methionine. Lys-313 acts as the Proton acceptor in catalysis.

Belongs to the class I-like SAM-binding methyltransferase superfamily. RNA methyltransferase RlmE family. RlmM subfamily. As to quaternary structure, monomer.

Its subcellular location is the cytoplasm. It carries out the reaction cytidine(2498) in 23S rRNA + S-adenosyl-L-methionine = 2'-O-methylcytidine(2498) in 23S rRNA + S-adenosyl-L-homocysteine + H(+). Catalyzes the 2'-O-methylation at nucleotide C2498 in 23S rRNA. The protein is Ribosomal RNA large subunit methyltransferase M of Actinobacillus succinogenes (strain ATCC 55618 / DSM 22257 / CCUG 43843 / 130Z).